Consider the following 86-residue polypeptide: Acyl carrier protein (86 aa).

The 81-residue stretch at 2–82 (ATVFERVKKV…AVVDYLKSKG (81 aa)) folds into the Carrier domain. At serine 37 the chain carries O-(pantetheine 4'-phosphoryl)serine.

It belongs to the acyl carrier protein (ACP) family. Post-translationally, 4'-phosphopantetheine is transferred from CoA to a specific serine of apo-ACP by AcpS. This modification is essential for activity because fatty acids are bound in thioester linkage to the sulfhydryl of the prosthetic group.

It is found in the cytoplasm. Its pathway is lipid metabolism; fatty acid biosynthesis. Functionally, carrier of the growing fatty acid chain in fatty acid biosynthesis. The chain is Acyl carrier protein from Dehalococcoides mccartyi (strain ATCC BAA-2100 / JCM 16839 / KCTC 5957 / BAV1).